The primary structure comprises 600 residues: DNA mismatch repair protein MutL (600 aa).

This sequence belongs to the DNA mismatch repair MutL/HexB family.

Functionally, this protein is involved in the repair of mismatches in DNA. It is required for dam-dependent methyl-directed DNA mismatch repair. May act as a 'molecular matchmaker', a protein that promotes the formation of a stable complex between two or more DNA-binding proteins in an ATP-dependent manner without itself being part of a final effector complex. The chain is DNA mismatch repair protein MutL from Rickettsia typhi (strain ATCC VR-144 / Wilmington).